The sequence spans 649 residues: MFQNNPLLTQLKKNLHAKSPRVEGIVKSTERGFGFLEVDPQKSYFIPPKNMKNVMHGDKIIALLTTEKDREIVEPEKLIEPFLNRFVGKIEKKDNRLFIVPDYPFLKDLITCQPNKNCINIFQNGDWAVAQLKKHKLKGDHLFYAELTEKITQEDDPLIPWWVTLARHDLDRKEPLAEEDDLILKESDNRKDLTDLDFITIDNTNTKDIDDALFVSEKNNGDISLIVAIADPTAYIKHGSKLDVIASKRIFTNYLPGFNIPMLPRNLSEDICSLNPNKRRPVLACHITVLKNGNISNKIEFFLAWIKSKSKLSYDHVSDWIEKIGSWIPPTKSIANQILILHRLCLLRIKWRKKNAVLFKDSIEYRFHVSEHGKIIDVLIEKRRIAHKIIEESMIVANISAANFLSKNIGFGIYNVHSGFDLVNAENAVSFLRSYNLNFTVKEITTLKGFCNLRRVLNIISNNYIDSRIRRFQSFGDFSTIPGPHFALGFSEYATWTSPIRKYSDMINHRLLKSIIKKEKSIKPGEDIKIKISEQRRRNRMAERDVSDWLYTIFLQKKKYQNQKFNAEITDISRSGIRARLIENGANVFIPGTLIHPIREELNFNQESGKVFINGIMHYKISDLIQVTLSDIRLKTRSIIAKPVFEKFK.

Residues 190–517 enclose the RNB domain; that stretch reads RKDLTDLDFI…NHRLLKSIIK (328 aa). An S1 motif domain is found at 562-644; the sequence is NQKFNAEITD…KTRSIIAKPV (83 aa).

The protein belongs to the RNR ribonuclease family. RNase II subfamily.

It localises to the cytoplasm. It catalyses the reaction Exonucleolytic cleavage in the 3'- to 5'-direction to yield nucleoside 5'-phosphates.. Involved in mRNA degradation. Hydrolyzes single-stranded polyribonucleotides processively in the 3' to 5' direction. This is Exoribonuclease 2 from Buchnera aphidicola subsp. Acyrthosiphon pisum (strain 5A).